Consider the following 303-residue polypeptide: Movement protein (303 aa).

The protein belongs to the tobamovirus movement protein family.

Its subcellular location is the host cytoplasm. The protein resides in the host cytoskeleton. It is found in the host cell junction. The protein localises to the host plasmodesma. Its function is as follows. Transports viral genome to neighboring plant cells directly through plasmosdesmata, without any budding. The movement protein allows efficient cell to cell propagation, by bypassing the host cell wall barrier. Forms a ribonucleoprotein complex with viral RNA. Binds microtubules and modulates microtubule stability. Can bind double-stranded DNA. The protein is Movement protein (MP) of Cymbidium (ORSV).